An 89-amino-acid polypeptide reads, in one-letter code: Small ribosomal subunit protein bS20 (89 aa).

The tract at residues 1–22 (MANTASARKRIRQNERRRERNV) is disordered. The span at 12-22 (RQNERRRERNV) shows a compositional bias: basic and acidic residues.

This sequence belongs to the bacterial ribosomal protein bS20 family.

Binds directly to 16S ribosomal RNA. The chain is Small ribosomal subunit protein bS20 from Gluconobacter oxydans (strain 621H) (Gluconobacter suboxydans).